The following is a 235-amino-acid chain: Ubiquinone/menaquinone biosynthesis C-methyltransferase UbiE (235 aa).

S-adenosyl-L-methionine-binding residues include Thr-59, Asp-84, and Ser-123.

It belongs to the class I-like SAM-binding methyltransferase superfamily. MenG/UbiE family.

The enzyme catalyses a 2-demethylmenaquinol + S-adenosyl-L-methionine = a menaquinol + S-adenosyl-L-homocysteine + H(+). It carries out the reaction a 2-methoxy-6-(all-trans-polyprenyl)benzene-1,4-diol + S-adenosyl-L-methionine = a 5-methoxy-2-methyl-3-(all-trans-polyprenyl)benzene-1,4-diol + S-adenosyl-L-homocysteine + H(+). It participates in quinol/quinone metabolism; menaquinone biosynthesis; menaquinol from 1,4-dihydroxy-2-naphthoate: step 2/2. The protein operates within cofactor biosynthesis; ubiquinone biosynthesis. In terms of biological role, methyltransferase required for the conversion of demethylmenaquinol (DMKH2) to menaquinol (MKH2) and the conversion of 2-polyprenyl-6-methoxy-1,4-benzoquinol (DDMQH2) to 2-polyprenyl-3-methyl-6-methoxy-1,4-benzoquinol (DMQH2). This is Ubiquinone/menaquinone biosynthesis C-methyltransferase UbiE from Campylobacter jejuni subsp. jejuni serotype O:2 (strain ATCC 700819 / NCTC 11168).